The sequence spans 353 residues: Photosystem II protein D1 (353 aa).

T2 is modified (N-acetylthreonine). T2 carries the post-translational modification Phosphothreonine. 3 helical membrane passes run 29–46 (YIGW…TATS), 118–133 (HFLL…EWEL), and 142–156 (WIAV…AATA). Residue H118 coordinates chlorophyll a. Position 126 (Y126) interacts with pheophytin a. Positions 170 and 189 each coordinate [CaMn4O5] cluster. Residues 197–218 (FHMLGVAGVFGGSLFSAMHGSL) form a helical membrane-spanning segment. H198 provides a ligand contact to chlorophyll a. A quinone contacts are provided by residues H215 and 264 to 265 (SF). H215 contacts Fe cation. Residue H272 coordinates Fe cation. The chain crosses the membrane as a helical span at residues 274-288 (FLAAWPVAGIWFTAL). Residues H332, E333, D342, and A344 each contribute to the [CaMn4O5] cluster site. Residues 345 to 353 (AVESISIGG) constitute a propeptide that is removed on maturation.

It belongs to the reaction center PufL/M/PsbA/D family. As to quaternary structure, PSII is composed of 1 copy each of membrane proteins PsbA, PsbB, PsbC, PsbD, PsbE, PsbF, PsbH, PsbI, PsbJ, PsbK, PsbL, PsbM, PsbT, PsbX, PsbY, PsbZ, Psb30/Ycf12, at least 3 peripheral proteins of the oxygen-evolving complex and a large number of cofactors. It forms dimeric complexes. Requires The D1/D2 heterodimer binds P680, chlorophylls that are the primary electron donor of PSII, and subsequent electron acceptors. It shares a non-heme iron and each subunit binds pheophytin, quinone, additional chlorophylls, carotenoids and lipids. D1 provides most of the ligands for the Mn4-Ca-O5 cluster of the oxygen-evolving complex (OEC). There is also a Cl(-1) ion associated with D1 and D2, which is required for oxygen evolution. The PSII complex binds additional chlorophylls, carotenoids and specific lipids. as cofactor. Tyr-161 forms a radical intermediate that is referred to as redox-active TyrZ, YZ or Y-Z. In terms of processing, C-terminally processed by CTPA; processing is essential to allow assembly of the oxygen-evolving complex and thus photosynthetic growth.

The protein localises to the plastid. Its subcellular location is the chloroplast thylakoid membrane. The enzyme catalyses 2 a plastoquinone + 4 hnu + 2 H2O = 2 a plastoquinol + O2. In terms of biological role, photosystem II (PSII) is a light-driven water:plastoquinone oxidoreductase that uses light energy to abstract electrons from H(2)O, generating O(2) and a proton gradient subsequently used for ATP formation. It consists of a core antenna complex that captures photons, and an electron transfer chain that converts photonic excitation into a charge separation. The D1/D2 (PsbA/PsbD) reaction center heterodimer binds P680, the primary electron donor of PSII as well as several subsequent electron acceptors. The sequence is that of Photosystem II protein D1 from Pinus contorta (Shore pine).